Reading from the N-terminus, the 423-residue chain is MSFCDDREGQRALRILQARLIRSPDACSFALTAVSSLLRKYSIDPRRIGRLEVGTESLVDKSKSIKSFVMQLFEESGNFDIEGVDTVNACYGGTNALFNAVNWVESSAWDGRDAIVVASDISLYGKGNARPTGGAGCVAMLVGPDAPIAFEPGRRGSYMAHTYDFYKPDFTTEYPYINGKHSIECYIQAVEACYRAYTKRERRATERLEEERPDHQAGYETPLDRFDYLCFHSPTNKLVSKSYARLLYVDYLENPANPIFAEVPDSIREVEYRASLTDKSIEKTFMGLAQERFARCVQPSTEIPNMCGNMYSASVYGSLCSLLCNVNSETLLGKRITIFSYGSGLASSMFSLKVRGSTKQMAEKLDVHRRLVDRVVVSPEDVRERAYLKKCFKPKGGAGPIPADVYSLAEVDELFRRVYTVKS.

Belongs to the thiolase-like superfamily. HMG-CoA synthase family.

Its pathway is mycotoxin biosynthesis. In terms of biological role, hydroxymethylglutaryl-CoA synthase-like protein; part of the gene clusters that mediate the biosynthesis of the host-selective toxins (HSTs) AK-toxins responsible for Japanese pear black spot disease by the Japanese pear pathotype. AK-toxins are esters of 9,10-epoxy 8-hydroxy 9-methyldecatrienoic acid (EDA). On cellular level, AK-toxins affect plasma membrane of susceptible cells and cause a sudden increase in loss of K(+) after a few minutes of toxin treatment. The acyl-CoA ligase AKT1, the hydrolase AKT2 and enoyl-CoA hydratase AKT3 are all involved in the biosynthesis of the AK-, AF- and ACT-toxin common 9,10-epoxy-8-hydroxy-9-methyl-decatrienoic acid (EDA) structural moiety. Part of the EDA biosynthesis occurs in the peroxisome since these 3 enzymes are localized in peroxisomes. The exact roles of the 3 enzymes, as well as of additional AK-toxin clusters enzymes, including AKT4, AKT6 and AKTS1, have still to be elucidated. The Cytochrome P450 monooxygenase AKT7 on the other side functions to limit production of EDA and AK-toxin, probably via the catalysis of a side reaction of EDA or its precursor. This Alternaria alternata (Alternaria rot fungus) protein is Hydroxymethylglutaryl-CoA synthase-like protein AKT4-1.